Consider the following 250-residue polypeptide: Menaquinol:cytochrome c reductase cytochrome c subunit (250 aa).

3 helical membrane-spanning segments follow: residues 46 to 62 (WLVGSVFLVGFLCLTVA), 104 to 124 (VIGAIVMPGLAFGALLLAPFL), and 137 to 157 (VATGMMLLTLAAIVYLTWESV). One can recognise a Cytochrome c domain in the interval 178–250 (DTNAEGYKIA…LQKMANSSPA (73 aa)). Residues Cys-192, Cys-195, and His-196 each contribute to the heme c site. The segment at 229–250 (MPGGIFKGTDEELQKMANSSPA) is disordered.

The protein belongs to the cytochrome b family. The main subunits of the menaquinol:cytochrome c complex are a Rieske-type iron-sulfur protein (QcrA), a cytochrome b (QcrB) and a cytochrome c (QcrC). Heme c serves as cofactor.

Its subcellular location is the cell membrane. Component of the menaquinol:cytochrome c reductase complex. This Geobacillus thermodenitrificans protein is Menaquinol:cytochrome c reductase cytochrome c subunit (qcrC).